The primary structure comprises 382 residues: Galactokinase (382 aa).

34–37 (EHTD) contributes to the substrate binding site. ATP is bound at residue 124–130 (GAGLSSS). 2 residues coordinate Mg(2+): serine 130 and glutamate 162. The active-site Proton acceptor is aspartate 174. Substrate is bound at residue tyrosine 223.

The protein belongs to the GHMP kinase family. GalK subfamily.

It is found in the cytoplasm. The enzyme catalyses alpha-D-galactose + ATP = alpha-D-galactose 1-phosphate + ADP + H(+). It participates in carbohydrate metabolism; galactose metabolism. In terms of biological role, catalyzes the transfer of the gamma-phosphate of ATP to D-galactose to form alpha-D-galactose-1-phosphate (Gal-1-P). The protein is Galactokinase of Escherichia coli O127:H6 (strain E2348/69 / EPEC).